The sequence spans 396 residues: Cell adhesion molecule 3 (396 aa).

A signal peptide spans 1–22; that stretch reads MGAPSALPLLLLLACSWAPGGA. The Ig-like V-type domain maps to 23 to 124; it reads NLSQDDSQPW…VRTAKSLVTV (102 aa). Residues 23 to 328 lie on the Extracellular side of the membrane; it reads NLSQDDSQPW…PVPSSSSTYH (306 aa). 3 disulfides stabilise this stretch: Cys-48–Cys-108, Cys-150–Cys-207, and Cys-252–Cys-297. 2 Ig-like C2-type domains span residues 128–226 and 231–313; these read PQKP…QRIE and PTAM…FTLN. Asn-288 is a glycosylation site (N-linked (GlcNAc...) asparagine). Residues 329-349 traverse the membrane as a helical segment; sequence AIIGGIVAFIVFLLLILLIFL. Residues 350 to 396 are Cytoplasmic-facing; that stretch reads GHYLIRHKGTYLTHEAKGSDDAPDADTAIINAEGGQSGGDDKKEYFI. A disordered region spans residues 365 to 396; it reads AKGSDDAPDADTAIINAEGGQSGGDDKKEYFI. The residue at position 386 (Ser-386) is a Phosphoserine.

Belongs to the nectin family. As to quaternary structure, homodimer. Can form trans-heterodimers with NECTIN3. Interacts with EPB41L1, DLG3, PALS2 and CASK.

It is found in the cell membrane. It localises to the cell junction. Its function is as follows. Involved in cell-cell adhesion. Has both calcium-independent homophilic cell-cell adhesion activity and calcium-independent heterophilic cell-cell adhesion activity with IGSF4, NECTIN1 and NECTIN3. Interaction with EPB41L1 may regulate structure or function of cell-cell junctions. The sequence is that of Cell adhesion molecule 3 (Cadm3) from Rattus norvegicus (Rat).